The following is a 429-amino-acid chain: Phosphoribosylamine--glycine ligase (429 aa).

The region spanning 109 to 316 (KDFLARHQIP…LVELCLAAID (208 aa)) is the ATP-grasp domain. ATP is bound at residue 135-196 (VREQGAPIVV…EEFLDGEEAS (62 aa)). Residues 212–234 (SQDHKRVGDKDTGPNTGGMGAYS) are disordered. Over residues 213 to 223 (QDHKRVGDKDT) the composition is skewed to basic and acidic residues. Mg(2+) contacts are provided by E286 and N288.

It belongs to the GARS family. The cofactor is Mg(2+). Mn(2+) is required as a cofactor.

It catalyses the reaction 5-phospho-beta-D-ribosylamine + glycine + ATP = N(1)-(5-phospho-beta-D-ribosyl)glycinamide + ADP + phosphate + H(+). It participates in purine metabolism; IMP biosynthesis via de novo pathway; N(1)-(5-phospho-D-ribosyl)glycinamide from 5-phospho-alpha-D-ribose 1-diphosphate: step 2/2. This chain is Phosphoribosylamine--glycine ligase, found in Vibrio vulnificus (strain CMCP6).